Reading from the N-terminus, the 605-residue chain is DNA mismatch repair protein MutL (605 aa).

The protein belongs to the DNA mismatch repair MutL/HexB family.

This protein is involved in the repair of mismatches in DNA. It is required for dam-dependent methyl-directed DNA mismatch repair. May act as a 'molecular matchmaker', a protein that promotes the formation of a stable complex between two or more DNA-binding proteins in an ATP-dependent manner without itself being part of a final effector complex. The polypeptide is DNA mismatch repair protein MutL (Rhizobium meliloti (strain 1021) (Ensifer meliloti)).